The primary structure comprises 380 residues: MIDFPIKYRLIKKEKYTGARLGEIITPHGTFPTPMFMPVGTQATVKTQSPEELQQMGSGIILANTYHLWLRPGDELIAKAGGLHKFMNWDQAILTDSGGFQVYSLAEKRDISEEGVTFKNHLNGSKMFLSPEKAISVQNNLGSDIMMSFDECPQFYQPYDYVKKSIERTSRWAERGLKAHRRPHDQGLFGIVQGAGFEDLRRQSSHDLVSMDFPGYSIGGLAVGETHEEMNAVLDFTVPLLPENKPRYLMGVGAPDSLIDGVIRGVDMYDCVLPTRIARNGTCMTSNGRLVVKNAAYAEDFSPIDPECDCYTCKNYTRAYVRHLLKADETFGIRLTSYHNLYFLVNLMARVRQAIVDDNLLEFRQDFIEKYGYNASNRNF.

The active-site Proton acceptor is the aspartate 96. Substrate-binding positions include 96-100 (DSGGF), aspartate 150, glutamine 193, and glycine 220. The RNA binding stretch occupies residues 251-257 (GVGAPDS). Residue aspartate 270 is the Nucleophile of the active site. The RNA binding; important for wobble base 34 recognition stretch occupies residues 275-279 (TRIAR). Residues cysteine 308, cysteine 310, cysteine 313, and histidine 339 each coordinate Zn(2+).

This sequence belongs to the queuine tRNA-ribosyltransferase family. As to quaternary structure, homodimer. Within each dimer, one monomer is responsible for RNA recognition and catalysis, while the other monomer binds to the replacement base PreQ1. Zn(2+) is required as a cofactor.

It catalyses the reaction 7-aminomethyl-7-carbaguanine + guanosine(34) in tRNA = 7-aminomethyl-7-carbaguanosine(34) in tRNA + guanine. It participates in tRNA modification; tRNA-queuosine biosynthesis. In terms of biological role, catalyzes the base-exchange of a guanine (G) residue with the queuine precursor 7-aminomethyl-7-deazaguanine (PreQ1) at position 34 (anticodon wobble position) in tRNAs with GU(N) anticodons (tRNA-Asp, -Asn, -His and -Tyr). Catalysis occurs through a double-displacement mechanism. The nucleophile active site attacks the C1' of nucleotide 34 to detach the guanine base from the RNA, forming a covalent enzyme-RNA intermediate. The proton acceptor active site deprotonates the incoming PreQ1, allowing a nucleophilic attack on the C1' of the ribose to form the product. After dissociation, two additional enzymatic reactions on the tRNA convert PreQ1 to queuine (Q), resulting in the hypermodified nucleoside queuosine (7-(((4,5-cis-dihydroxy-2-cyclopenten-1-yl)amino)methyl)-7-deazaguanosine). The protein is Queuine tRNA-ribosyltransferase of Streptococcus thermophilus (strain CNRZ 1066).